The chain runs to 123 residues: Protein Wnt-7 (123 aa).

Ser-1 carries the O-palmitoleoyl serine; by PORCN lipid modification. 2 N-linked (GlcNAc...) asparagine glycosylation sites follow: Asn-79 and Asn-90. An intrachain disulfide couples Cys-89 to Cys-104.

Belongs to the Wnt family. Palmitoleoylation is required for efficient binding to frizzled receptors. Depalmitoleoylation leads to Wnt signaling pathway inhibition.

It is found in the secreted. The protein localises to the extracellular space. The protein resides in the extracellular matrix. Its function is as follows. Ligand for members of the frizzled family of seven transmembrane receptors. Probable developmental protein. May be a signaling molecule which affects the development of discrete regions of tissues. Is likely to signal over only few cell diameters. The sequence is that of Protein Wnt-7 (WNT-7) from Strongylocentrotus purpuratus (Purple sea urchin).